Reading from the N-terminus, the 811-residue chain is Probable disease resistance protein At5g04720 (811 aa).

In terms of domain architecture, RPW8 spans 1–147 (MADIIGGEVV…KVDSLNEKLG (147 aa)). NB-ARC domains lie at 180–242 (VGLD…VSQS) and 312–437 (TYDV…NVLV). 207 to 214 (GMSGSGKT) is an ATP binding site. LRR repeat units lie at residues 650–674 (FPKL…ICGI), 676–699 (SLNS…SKLK), 700–722 (ALQL…ICEL), 724–746 (RLKY…IGKV), and 748–769 (TLEK…VVLL).

The protein belongs to the disease resistance NB-LRR family.

Its function is as follows. Probable disease resistance protein. The chain is Probable disease resistance protein At5g04720 from Arabidopsis thaliana (Mouse-ear cress).